Reading from the N-terminus, the 351-residue chain is Type II methyltransferase M.DsaV (351 aa).

In terms of domain architecture, SAM-dependent MTase C5-type spans 6–312 (LKFIDLFAGI…QKMLSYIDLT (307 aa)). Residue Cys75 is part of the active site.

The protein belongs to the class I-like SAM-binding methyltransferase superfamily. C5-methyltransferase family.

The enzyme catalyses a 2'-deoxycytidine in DNA + S-adenosyl-L-methionine = a 5-methyl-2'-deoxycytidine in DNA + S-adenosyl-L-homocysteine + H(+). A methylase, recognizes the double-stranded sequence 5'-CCNGG-3', methylates C-2 on both strands, and protects the DNA from cleavage by the DsaV endonuclease. The sequence is that of Type II methyltransferase M.DsaV from Dactylococcopsis salina (Myxobaktron salinum).